The chain runs to 296 residues: Polyamine aminopropyltransferase (296 aa).

The region spanning 16 to 251 is the PABS domain; it reads HLWYFEYYTG…GMWSYTFASK (236 aa). Q46 serves as a coordination point for S-methyl-5'-thioadenosine. Spermidine contacts are provided by H77 and D101. Residues E121 and 152 to 153 contribute to the S-methyl-5'-thioadenosine site; that span reads NG. The Proton acceptor role is filled by D170. 170–173 provides a ligand contact to spermidine; that stretch reads DSTD.

Belongs to the spermidine/spermine synthase family. Homodimer or homotetramer.

The protein localises to the cytoplasm. It carries out the reaction S-adenosyl 3-(methylsulfanyl)propylamine + putrescine = S-methyl-5'-thioadenosine + spermidine + H(+). Its pathway is amine and polyamine biosynthesis; spermidine biosynthesis; spermidine from putrescine: step 1/1. Its function is as follows. Catalyzes the irreversible transfer of a propylamine group from the amino donor S-adenosylmethioninamine (decarboxy-AdoMet) to putrescine (1,4-diaminobutane) to yield spermidine. This chain is Polyamine aminopropyltransferase, found in Thermotoga petrophila (strain ATCC BAA-488 / DSM 13995 / JCM 10881 / RKU-1).